A 2216-amino-acid chain; its full sequence is RNA-directed RNA polymerase L (2216 aa).

An endonuclease region spans residues 26–289 (KTSFLSQVNL…ETRTAMLDER (264 aa)). Mn(2+) is bound by residues glutamate 51, aspartate 88, and glutamate 101. The active site involves lysine 114. The RdRp catalytic domain maps to 1167–1364 (LDMKCVVRLS…YLSSKFNKFV (198 aa)). Aspartate 1323 contacts Mg(2+).

Belongs to the Bunyavirales RNA polymerase family. In terms of assembly, homomultimer; the oligomeric structure is essential for the polymerase activity. Interacts with nucleoprotein N. Interacts with protein Z; this interaction inhibits viral transcription and replication, Z partially blocks the product exit tunnel for the releasing nascent RNA product. It depends on Mn(2+) as a cofactor. The cofactor is Mg(2+).

Its subcellular location is the virion. The protein localises to the host cytoplasm. The enzyme catalyses RNA(n) + a ribonucleoside 5'-triphosphate = RNA(n+1) + diphosphate. Its function is as follows. RNA-dependent RNA polymerase, which is responsible for the replication and transcription of the viral RNA genome using antigenomic RNA as an intermediate. During transcription, synthesizes subgenomic RNAs and assures their capping by a cap-snatching mechanism, which involves the endonuclease activity cleaving the host capped pre-mRNAs. These short capped RNAs are then used as primers for viral transcription. The 3'-end of subgenomic mRNAs molecules are heterogeneous and not polyadenylated. The replicase function is to direct synthesis of antigenomic and genomic RNA which are encapsidated and non capped. As a consequence of the use of the same enzyme for both transcription and replication, these mechanisms need to be well coordinated. These processes may be regulated by proteins N and Z in a dose-dependent manner. Z protein inhibits the viral polymerase L und thus the viral transcription and RNA synthesis. The polypeptide is RNA-directed RNA polymerase L (Bear Canyon mammarenavirus (isolate Mouse/United States/AV A0070039/2000) (BCNV)).